The primary structure comprises 540 residues: 2-isopropylmalate synthase (540 aa).

The region spanning 8-273 (VLIFDTTLRD…FFGRDEDSPT (266 aa)) is the Pyruvate carboxyltransferase domain. The Mn(2+) site is built by Asp17, His208, His210, and Asn244. A regulatory domain region spans residues 408-540 (QLKLVQVSCG…MAQLDSSPVH (133 aa)).

Belongs to the alpha-IPM synthase/homocitrate synthase family. LeuA type 1 subfamily. As to quaternary structure, homodimer. Requires Mn(2+) as cofactor.

Its subcellular location is the cytoplasm. The catalysed reaction is 3-methyl-2-oxobutanoate + acetyl-CoA + H2O = (2S)-2-isopropylmalate + CoA + H(+). Its pathway is amino-acid biosynthesis; L-leucine biosynthesis; L-leucine from 3-methyl-2-oxobutanoate: step 1/4. In terms of biological role, catalyzes the condensation of the acetyl group of acetyl-CoA with 3-methyl-2-oxobutanoate (2-ketoisovalerate) to form 3-carboxy-3-hydroxy-4-methylpentanoate (2-isopropylmalate). In Synechococcus sp. (strain CC9311), this protein is 2-isopropylmalate synthase.